A 251-amino-acid polypeptide reads, in one-letter code: Small ribosomal subunit protein uS2 (251 aa).

It belongs to the universal ribosomal protein uS2 family.

The protein is Small ribosomal subunit protein uS2 of Aromatoleum aromaticum (strain DSM 19018 / LMG 30748 / EbN1) (Azoarcus sp. (strain EbN1)).